A 753-amino-acid chain; its full sequence is Enhancer of polycomb-like protein 1 (753 aa).

Disordered regions lie at residues 1-75 and 429-490; these read MAAA…RDLH and VRTE…LPPA. Positions 46–71 are enriched in polar residues; the sequence is LDSNELEPSQVHHLNSNASSSSTQQP. The segment covering 429-449 has biased composition (basic and acidic residues); it reads VRTEDEEREKKREKKKQDQEL. The segment covering 450-463 has biased composition (low complexity); that stretch reads ALKQQQALQQQQQQ.

Belongs to the enhancer of polycomb family. In terms of assembly, component of the NuA4 histone acetyltransferase complex.

Its subcellular location is the nucleus. Component of the NuA4 histone acetyltransferase complex which is involved in transcriptional activation of selected genes principally by acetylation of nucleosomal histone H4 and H2A. The NuA4 complex is also involved in DNA repair. Involved in gene silencing by neighboring heterochromatin, blockage of the silencing spreading along the chromosome, and required for cell cycle progression through G2/M. The chain is Enhancer of polycomb-like protein 1 (EPL1) from Candida albicans (strain SC5314 / ATCC MYA-2876) (Yeast).